Reading from the N-terminus, the 631-residue chain is MSDLQESLEKLSINEKAPQAPADDATPSNTTTLEKESSESAAAAAGEGAGEEGEEASASLYVGELNPSVNEALLFEIFSPIGQVSSIRVCRDAVTKKSLGYAYVNFHKHADGSRAIEELNYSLVDGRPCRIMWSQRDPSLRRNGDGNIFIKNLHPAIDNKALHDTFSAFGRILSCKVATDELGQSKCFGFVHYETAEAAEAAIENVNGMLLNDREVFVGKHVSKRDRESKFEEMKANFTNVYVKNLAPEVDNAKFEEIFKPFGPVTSVHLETDQEGKSRGFGFVNFENHESALNAVKEMNDKEIDGQKLYVGRAQKKRERLDELKRLYESTRLEKLSKYQGVNLFVKNLDDSIDSEKLEEEFKPFGTITSARVMVDDAGKSKGFGFVCFSSPEEATKAITEMNQRMIQGKPLYVALAQRKDVRRSQLEQQIQARNQMRMQNAAAAAGMPGQFMSPMFYGQQPGFFPPNGRGGAQGPFPPNPQMMMPRGGQMPPPQGQWPRAGPNGQPVPVYGMPPVYGGEFNGPNGQRQQRGAYPPNRNQKGGRPQRDLAAIISTVPVDQQKRILGEELYPKIVATGKAQEPEAAGKITGMMLDLENEEILALLEDDELFENHFEDALTAFEEYKKGEQAE.

The segment at 1-56 (MSDLQESLEKLSINEKAPQAPADDATPSNTTTLEKESSESAAAAAGEGAGEEGEEA) is disordered. 4 RRM domains span residues 58–136 (ASLY…WSQR), 146–223 (GNIF…KHVS), 239–316 (TNVY…RAQK), and 342–419 (VNLF…LAQR). The tract at residues 518 to 545 (GGEFNGPNGQRQQRGAYPPNRNQKGGRP) is disordered. Positions 545–626 (PQRDLAAIIS…ALTAFEEYKK (82 aa)) constitute a PABC domain.

The protein belongs to the polyadenylate-binding protein type-1 family.

It localises to the cytoplasm. Its subcellular location is the nucleus. Functionally, binds the poly(A) tail of mRNA. Appears to be an important mediator of the multiple roles of the poly(A) tail in mRNA biogenesis, stability and translation. In the nucleus, involved in both mRNA cleavage and polyadenylation. Is also required for efficient mRNA export to the cytoplasm. Acts in concert with a poly(A)-specific nuclease (PAN) to affect poly(A) tail shortening, which may occur concomitantly with either nucleocytoplasmic mRNA transport or translational initiation. In the cytoplasm, stimulates translation initiation and regulates mRNA decay through translation termination-coupled poly(A) shortening, probably mediated by PAN. The protein is Polyadenylate-binding protein, cytoplasmic and nuclear (PAB1) of Meyerozyma guilliermondii (strain ATCC 6260 / CBS 566 / DSM 6381 / JCM 1539 / NBRC 10279 / NRRL Y-324) (Yeast).